We begin with the raw amino-acid sequence, 191 residues long: Cdc42 homolog (191 aa).

GTP is bound at residue glycine 10–threonine 17. Positions tyrosine 32–tyrosine 40 match the Effector region motif. Residues aspartate 57 to glutamine 61 and threonine 115 to aspartate 118 each bind GTP. Cysteine 188 bears the Cysteine methyl ester mark. Cysteine 188 carries S-geranylgeranyl cysteine lipidation. A propeptide spans lysine 189 to leucine 191 (removed in mature form).

The protein belongs to the small GTPase superfamily. Rho family. CDC42 subfamily.

Its subcellular location is the cell junction. The protein resides in the adherens junction. It localises to the cell membrane. In terms of biological role, regulates mbt kinase activity and is also required to recruit mbt to adherens junctions. Together with mbt, regulates photoreceptor cell morphogenesis. The protein is Cdc42 homolog of Aedes aegypti (Yellowfever mosquito).